The sequence spans 170 residues: MTAAQADLQIDRPRVADGAALWRIARDSEVLDLNSSYSYLLWCRDFAATSAVVRDGHGVPVGFITGYVRPDSPDTLLVWQVAVDGTYRGRGLAATLVDGLADRVARERGITILETTISPDNTASQRLFTSFAERRGARLEREVLFDTAVFPDGPHEPEVLYRIGPLSAGG.

The N-acetyltransferase domain maps to 8–166; it reads LQIDRPRVAD…PEVLYRIGPL (159 aa).

It belongs to the acetyltransferase family. EctA subfamily.

The catalysed reaction is L-2,4-diaminobutanoate + acetyl-CoA = (2S)-4-acetamido-2-aminobutanoate + CoA + H(+). It participates in amine and polyamine biosynthesis; ectoine biosynthesis; L-ectoine from L-aspartate 4-semialdehyde: step 2/3. Its function is as follows. Catalyzes the acetylation of L-2,4-diaminobutyrate (DABA) to gamma-N-acetyl-alpha,gamma-diaminobutyric acid (ADABA) with acetyl coenzyme A. The sequence is that of L-2,4-diaminobutyric acid acetyltransferase (ectA) from Streptomyces coelicolor (strain ATCC BAA-471 / A3(2) / M145).